Consider the following 387-residue polypeptide: 3-ketoacyl-CoA thiolase (387 aa).

Residue cysteine 91 is the Acyl-thioester intermediate of the active site. Active-site proton acceptor residues include histidine 343 and cysteine 373.

The protein belongs to the thiolase-like superfamily. Thiolase family. Heterotetramer of two alpha chains (FadB) and two beta chains (FadA).

It is found in the cytoplasm. It catalyses the reaction an acyl-CoA + acetyl-CoA = a 3-oxoacyl-CoA + CoA. Its pathway is lipid metabolism; fatty acid beta-oxidation. Functionally, catalyzes the final step of fatty acid oxidation in which acetyl-CoA is released and the CoA ester of a fatty acid two carbons shorter is formed. This Yersinia enterocolitica serotype O:8 / biotype 1B (strain NCTC 13174 / 8081) protein is 3-ketoacyl-CoA thiolase.